Reading from the N-terminus, the 697-residue chain is Putative flagellar export/assembly protein LfhA (697 aa).

Transmembrane regions (helical) follow at residues 19–39 (VPLV…PALL), 40–60 (DILF…AVSA), 66–86 (FSLF…LNVA), 116–136 (GNFV…FIVV), 204–224 (AIAG…IGIF), 242–262 (IGDG…AAII), and 280–302 (LLAS…VVPG).

It belongs to the FHIPEP (flagella/HR/invasion proteins export pore) family.

Its subcellular location is the cell inner membrane. In terms of biological role, part of the flagellar gene cluster Flag-2. However, the Flag-2 flagellar system could be inactive in strain 042 due to a frameshift in lfgC. The chain is Putative flagellar export/assembly protein LfhA from Escherichia coli O44:H18 (strain 042 / EAEC).